Reading from the N-terminus, the 139-residue chain is Nucleoside diphosphate kinase (139 aa).

The ATP site is built by lysine 10, phenylalanine 58, arginine 86, threonine 92, arginine 104, and asparagine 114. Histidine 117 (pros-phosphohistidine intermediate) is an active-site residue.

It belongs to the NDK family. In terms of assembly, homotetramer. It depends on Mg(2+) as a cofactor.

It localises to the cytoplasm. The catalysed reaction is a 2'-deoxyribonucleoside 5'-diphosphate + ATP = a 2'-deoxyribonucleoside 5'-triphosphate + ADP. It carries out the reaction a ribonucleoside 5'-diphosphate + ATP = a ribonucleoside 5'-triphosphate + ADP. Its function is as follows. Major role in the synthesis of nucleoside triphosphates other than ATP. The ATP gamma phosphate is transferred to the NDP beta phosphate via a ping-pong mechanism, using a phosphorylated active-site intermediate. In Mycolicibacterium smegmatis (strain ATCC 700084 / mc(2)155) (Mycobacterium smegmatis), this protein is Nucleoside diphosphate kinase.